The chain runs to 569 residues: CTP synthase (569 aa).

An amidoligase domain region spans residues 1–276 (MNQATPTKHV…DAYLVRRLDL (276 aa)). Ser-18 provides a ligand contact to CTP. Ser-18 is a binding site for UTP. ATP-binding positions include 19–24 (SLGKGL) and Asp-76. Residues Asp-76 and Glu-150 each coordinate Mg(2+). Residues 157–159 (DIE), 197–202 (KTKPTQ), and Lys-233 contribute to the CTP site. UTP-binding positions include 197 to 202 (KTKPTQ) and Lys-233. Positions 301–550 (TVALVGKYVD…VGAAIERQRE (250 aa)) constitute a Glutamine amidotransferase type-1 domain. Position 364 (Gly-364) interacts with L-glutamine. Residue Cys-391 is the Nucleophile; for glutamine hydrolysis of the active site. Residues 392-395 (LGLQ), Glu-415, and Arg-476 each bind L-glutamine. Active-site residues include His-523 and Glu-525.

Belongs to the CTP synthase family. In terms of assembly, homotetramer.

It catalyses the reaction UTP + L-glutamine + ATP + H2O = CTP + L-glutamate + ADP + phosphate + 2 H(+). It carries out the reaction L-glutamine + H2O = L-glutamate + NH4(+). The enzyme catalyses UTP + NH4(+) + ATP = CTP + ADP + phosphate + 2 H(+). The protein operates within pyrimidine metabolism; CTP biosynthesis via de novo pathway; CTP from UDP: step 2/2. Its activity is regulated as follows. Allosterically activated by GTP, when glutamine is the substrate; GTP has no effect on the reaction when ammonia is the substrate. The allosteric effector GTP functions by stabilizing the protein conformation that binds the tetrahedral intermediate(s) formed during glutamine hydrolysis. Inhibited by the product CTP, via allosteric rather than competitive inhibition. In terms of biological role, catalyzes the ATP-dependent amination of UTP to CTP with either L-glutamine or ammonia as the source of nitrogen. Regulates intracellular CTP levels through interactions with the four ribonucleotide triphosphates. The polypeptide is CTP synthase (Nocardioides sp. (strain ATCC BAA-499 / JS614)).